We begin with the raw amino-acid sequence, 147 residues long: MTLPSLTKLLLKAKKEKNLSFEDLGNLINRDEVWVASLFYGQATASEEEATSLIAALDLTSDLKEDLSTPPVKGCLDPVIPTDPLIYRFYEIMQVYGLPMKDVIQEKFGDGIMSAIDFSIEVDKVEDPKGDRVLVKMCGKFLPYKKW.

Residues arginine 88, glutamate 91, and serine 114 contribute to the active site.

This sequence belongs to the cyanase family.

The catalysed reaction is cyanate + hydrogencarbonate + 3 H(+) = NH4(+) + 2 CO2. Catalyzes the reaction of cyanate with bicarbonate to produce ammonia and carbon dioxide. This is Cyanate hydratase from Prochlorococcus marinus subsp. pastoris (strain CCMP1986 / NIES-2087 / MED4).